Here is a 1255-residue protein sequence, read N- to C-terminus: ATP-binding cassette sub-family B member 5 (1255 aa).

A helical transmembrane segment spans residues 46–66 (IVLMTLGILASMINGATVPLM). An ABC transmembrane type-1 1 domain is found at 51 to 351 (LGILASMING…SVAPHLETFT (301 aa)). N-linked (GlcNAc...) asparagine glycans are attached at residues Asn-86 and Asn-92. A helical membrane pass occupies residues 104–124 (IIVLTLYYIGIGAAALIFGYV). N-linked (GlcNAc...) asparagine glycosylation is present at Asn-189. The next 2 membrane-spanning stretches (helical) occupy residues 290–310 (LSLGAVYFFMNGAYGLAFWYG) and 314–334 (IFGGEPGYTIGTILAVFFSVI). N-linked (GlcNAc...) asparagine glycosylation is found at Asn-372 and Asn-391. Residues 387–623 (IEFKNVSFSY…QGLYYSLAMA (237 aa)) form the ABC transporter 1 domain. 422–429 (GPSGSGKS) lines the ATP pocket. Asn-643 carries N-linked (GlcNAc...) asparagine glycosylation. 2 helical membrane-spanning segments follow: residues 694-714 (VLGTLASALNGSVHPVFSIIF) and 738-758 (MMLVVLGIVALVTYLMQGLFY). The 288-residue stretch at 694-981 (VLGTLASALN…TLVWAPEYSK (288 aa)) folds into the ABC transmembrane type-1 2 domain. Asn-790 is a glycosylation site (N-linked (GlcNAc...) asparagine). Transmembrane regions (helical) follow at residues 814–836 (LGIVTQDVSNMSLSILISFIYGW), 841–863 (LILSFAPVLAVTGMIQTAAMAGF), and 955–975 (MFIVFTAIAYGAMAIGETLVW). Positions 1016–1254 (LEFREVSFVY…GDTYFKLVAA (239 aa)) constitute an ABC transporter 2 domain. An N-linked (GlcNAc...) asparagine glycan is attached at Asn-1036. Position 1051–1058 (1051–1058 (GSSGCGKS)) interacts with ATP. Residues Asn-1105, Asn-1189, and Asn-1229 are each glycosylated (N-linked (GlcNAc...) asparagine).

Belongs to the ABC transporter superfamily. ABCB family. Multidrug resistance exporter (TC 3.A.1.201) subfamily. As to expression, in developing eye, expressed in basal limbal epithelium but not in central cornea. Acts as a marker of limbal stem cells.

It is found in the cell membrane. It catalyses the reaction daunorubicin(in) + ATP + H2O = daunorubicin(out) + ADP + phosphate + H(+). In terms of biological role, energy-dependent efflux transporter responsible for decreased drug accumulation in multidrug-resistant cells. Specifically present in limbal stem cells, where it plays a key role in corneal development and repair. This Mus musculus (Mouse) protein is ATP-binding cassette sub-family B member 5.